We begin with the raw amino-acid sequence, 315 residues long: Aspartate carbamoyltransferase catalytic subunit (315 aa).

Residues Arg65 and Thr66 each coordinate carbamoyl phosphate. Position 93 (Lys93) interacts with L-aspartate. Positions 115, 143, and 146 each coordinate carbamoyl phosphate. Positions 176 and 231 each coordinate L-aspartate. The carbamoyl phosphate site is built by Gly272 and Pro273.

This sequence belongs to the aspartate/ornithine carbamoyltransferase superfamily. ATCase family. Heterododecamer (2C3:3R2) of six catalytic PyrB chains organized as two trimers (C3), and six regulatory PyrI chains organized as three dimers (R2).

The enzyme catalyses carbamoyl phosphate + L-aspartate = N-carbamoyl-L-aspartate + phosphate + H(+). Its pathway is pyrimidine metabolism; UMP biosynthesis via de novo pathway; (S)-dihydroorotate from bicarbonate: step 2/3. Functionally, catalyzes the condensation of carbamoyl phosphate and aspartate to form carbamoyl aspartate and inorganic phosphate, the committed step in the de novo pyrimidine nucleotide biosynthesis pathway. This is Aspartate carbamoyltransferase catalytic subunit from Hyphomonas neptunium (strain ATCC 15444).